The chain runs to 758 residues: 5-methyltetrahydropteroyltriglutamate--homocysteine methyltransferase (758 aa).

5-methyltetrahydropteroyltri-L-glutamate-binding positions include arginine 17–lysine 20 and lysine 117. L-homocysteine-binding positions include isoleucine 434–serine 436 and glutamate 487. L-methionine contacts are provided by residues isoleucine 434–serine 436 and glutamate 487. Residues arginine 518–cysteine 519 and tryptophan 564 each bind 5-methyltetrahydropteroyltri-L-glutamate. Residue aspartate 602 coordinates L-homocysteine. L-methionine is bound at residue aspartate 602. Glutamate 608 lines the 5-methyltetrahydropteroyltri-L-glutamate pocket. Histidine 644, cysteine 646, and glutamate 668 together coordinate Zn(2+). Histidine 697 (proton donor) is an active-site residue. Cysteine 729 lines the Zn(2+) pocket.

The protein belongs to the vitamin-B12 independent methionine synthase family. The cofactor is Zn(2+).

It carries out the reaction 5-methyltetrahydropteroyltri-L-glutamate + L-homocysteine = tetrahydropteroyltri-L-glutamate + L-methionine. The protein operates within amino-acid biosynthesis; L-methionine biosynthesis via de novo pathway; L-methionine from L-homocysteine (MetE route): step 1/1. Catalyzes the transfer of a methyl group from 5-methyltetrahydrofolate to homocysteine resulting in methionine formation. In Yersinia pseudotuberculosis serotype O:1b (strain IP 31758), this protein is 5-methyltetrahydropteroyltriglutamate--homocysteine methyltransferase.